Reading from the N-terminus, the 61-residue chain is Large ribosomal subunit protein bL28 (61 aa).

A disordered region spans residues 1–27 (MAKDFVTGKKTTFGNTRSHALNSSSRS). Over residues 9–27 (KKTTFGNTRSHALNSSSRS) the composition is skewed to polar residues.

It belongs to the bacterial ribosomal protein bL28 family.

In Lactobacillus delbrueckii subsp. bulgaricus (strain ATCC 11842 / DSM 20081 / BCRC 10696 / JCM 1002 / NBRC 13953 / NCIMB 11778 / NCTC 12712 / WDCM 00102 / Lb 14), this protein is Large ribosomal subunit protein bL28.